The primary structure comprises 238 residues: Purine nucleoside phosphorylase DeoD-type (238 aa).

His-5 lines the a purine D-ribonucleoside pocket. Residues Gly-21, Arg-25, Arg-44, and 88–91 each bind phosphate; that span reads RVGS. A purine D-ribonucleoside contacts are provided by residues 180–182 and 204–205; these read EME and SD. Asp-205 (proton donor) is an active-site residue.

Belongs to the PNP/UDP phosphorylase family. As to quaternary structure, homohexamer; trimer of homodimers.

It catalyses the reaction a purine D-ribonucleoside + phosphate = a purine nucleobase + alpha-D-ribose 1-phosphate. The catalysed reaction is a purine 2'-deoxy-D-ribonucleoside + phosphate = a purine nucleobase + 2-deoxy-alpha-D-ribose 1-phosphate. Its function is as follows. Catalyzes the reversible phosphorolytic breakdown of the N-glycosidic bond in the beta-(deoxy)ribonucleoside molecules, with the formation of the corresponding free purine bases and pentose-1-phosphate. This Photorhabdus laumondii subsp. laumondii (strain DSM 15139 / CIP 105565 / TT01) (Photorhabdus luminescens subsp. laumondii) protein is Purine nucleoside phosphorylase DeoD-type.